We begin with the raw amino-acid sequence, 116 residues long: Ly-6/neurotoxin-like protein 1 (116 aa).

Residues 1 to 20 form the signal peptide; sequence MTPLLTLFLVALIGLPLAQA. The region spanning 21–105 is the UPAR/Ly6 domain; the sequence is LDCHVCAYNG…FAAPATLALA (85 aa). 5 cysteine pairs are disulfide-bonded: Cys-23–Cys-46, Cys-26–Cys-33, Cys-39–Cys-64, Cys-68–Cys-85, and Cys-86–Cys-91. Asn-92 is lipidated: GPI-anchor amidated asparagine. The propeptide at 93 to 116 is removed in mature form; it reads GAGFAAPATLALAPILLATLWGLL.

As to quaternary structure, interacts with nAChRs containing alpha-4:beta-2 (CHRNA4:CHRNB2) and alpha-7 (CHRNA7) subunits. Interacts with CHRNA4 probably in the endoplasmic reticulum prior to nAChR pentameric assembly. Interacts with KCNA2/Potassium voltage-gated channel subfamily A member 2.

The protein resides in the cell membrane. Its subcellular location is the cell projection. It is found in the dendrite. The protein localises to the endoplasmic reticulum. Acts in different tissues through interaction to nicotinic acetylcholine receptors (nAChRs). The proposed role as modulator of nAChR activity seems to be dependent on the nAChR subtype and stoichiometry, and to involve an effect on nAChR trafficking and its cell surface expression, and on single channel properties of the nAChR inserted in the plasma membrane. Modulates functional properties of nicotinic acetylcholine receptors (nAChRs) to prevent excessive excitation, and hence neurodegeneration. Enhances desensitization by increasing both the rate and extent of desensitization of alpha-4:beta-2-containing nAChRs and slowing recovery from desensitization. Promotes large amplitude ACh-evoked currents through alpha-4:beta-2 nAChRs. Is involved in regulation of the nAChR pentameric assembly in the endoplasmic reticulum. Shifts stoichiometry from high sensitivity alpha-4(2):beta-2(3) to low sensitivity alpha-4(3):beta-2(2) nAChR. In vitro modulates alpha-3:beta-4-containing nAChRs. Reduces cell surface expression of (alpha-3:beta-4)(2):beta-4 and (alpha-3:beta-4)(2):alpha-5 nAChRs suggesting an interaction with nAChR alpha-3(-):(+)beta-4 subunit interfaces and an allosteric mode. Corresponding single channel effects characterized by decreased unitary conductance, altered burst proportions and enhanced desensitization/inactivation seem to depend on nAChR alpha:alpha subunit interfaces and are greater in (alpha-3:beta-2)(2):alpha-3 when compared to (alpha-3:beta-2)(2):alpha-5 nAChRs. Prevents plasticity in the primary visual cortex late in life. The protein is Ly-6/neurotoxin-like protein 1 of Saimiri boliviensis boliviensis (Bolivian squirrel monkey).